A 213-amino-acid polypeptide reads, in one-letter code: Uridine kinase (213 aa).

15-22 (GASASGKS) is a binding site for ATP.

The protein belongs to the uridine kinase family.

Its subcellular location is the cytoplasm. The catalysed reaction is uridine + ATP = UMP + ADP + H(+). It catalyses the reaction cytidine + ATP = CMP + ADP + H(+). The protein operates within pyrimidine metabolism; CTP biosynthesis via salvage pathway; CTP from cytidine: step 1/3. It participates in pyrimidine metabolism; UMP biosynthesis via salvage pathway; UMP from uridine: step 1/1. The sequence is that of Uridine kinase from Enterobacter sp. (strain 638).